Reading from the N-terminus, the 98-residue chain is Small ribosomal subunit protein bS6c (98 aa).

This sequence belongs to the bacterial ribosomal protein bS6 family.

The protein resides in the plastid. Its subcellular location is the chloroplast. Its function is as follows. Binds together with bS18 to 16S ribosomal RNA. The chain is Small ribosomal subunit protein bS6c from Phaeodactylum tricornutum (strain CCAP 1055/1).